A 457-amino-acid polypeptide reads, in one-letter code: MITMTNWESLYEKALDKVEASIRKVRGVLLAYNTNIDAIKYLKREDLEKRIEKVGKEEVLRYSEELPKEIETIPQLLGSILWSIKRGKAAELLVVSREVREYMRKWGWDELRMGGQVGIMANLLGGVYGIPVIAHVPQLSELQASLFLDGPIYVPTFERGELRLIHPREFRKGEEDCIHYIYEFPRNFKVLDFEAPRENRFIGAADDYNPILYVREEWIERFEEIAKRSELAIISGLHPLTQENHGKPIKLVREHLKILNDLGIRAHLEFAFTPDEVVRLEIVKLLKHFYSVGLNEVELASVVSVMGEKELAERIISKDPADPIAVIEGLLKLIKETGVKRIHFHTYGYYLALTREKGEHVRDALLFSALAAATKAMKGNIEKLSDIREGLAVPIGEQGLEVEKILEKEFSLRDGIGSIEDYQLTFIPTKVVKKPKSTVGIGDTISSSAFVSEFSLH.

In terms of domain architecture, ADPK spans 5–457 (TNWESLYEKA…SAFVSEFSLH (453 aa)). D-glucose is bound by residues Asp37, Glu91, 115-116 (GQ), and His179. Position 269 (Glu269) interacts with Mg(2+). Asn295 serves as a coordination point for ADP. Glu298 contacts Mg(2+). Residues 345–346 (HT), Val432, and Gly442 each bind ADP. Asp443 is a D-glucose binding site. Asp443 serves as a coordination point for Mg(2+). Asp443 acts as the Proton acceptor in catalysis.

The protein belongs to the ADP-dependent glucokinase family. Requires Mg(2+) as cofactor.

The protein localises to the cytoplasm. It carries out the reaction D-glucose + ADP = D-glucose 6-phosphate + AMP + H(+). The enzyme catalyses D-glucosamine + ADP = D-glucosamine 6-phosphate + AMP + H(+). The protein operates within carbohydrate degradation; glycolysis. Inhibited by 8-bromoadenosine phosphate (8-Br-AMP). Its function is as follows. Catalyzes the ADP-dependent phosphorylation of D-glucose to D-glucose 6-phosphate and glucosamine to glucosamine 6-phosphate. The chain is ADP-dependent glucose/glucosamine kinase from Pyrococcus horikoshii (strain ATCC 700860 / DSM 12428 / JCM 9974 / NBRC 100139 / OT-3).